The primary structure comprises 140 residues: Large ribosomal subunit protein uL11 (140 aa).

Belongs to the universal ribosomal protein uL11 family. As to quaternary structure, part of the ribosomal stalk of the 50S ribosomal subunit. Interacts with L10 and the large rRNA to form the base of the stalk. L10 forms an elongated spine to which L12 dimers bind in a sequential fashion forming a multimeric L10(L12)X complex. In terms of processing, one or more lysine residues are methylated.

Functionally, forms part of the ribosomal stalk which helps the ribosome interact with GTP-bound translation factors. The polypeptide is Large ribosomal subunit protein uL11 (Heliobacterium modesticaldum (strain ATCC 51547 / Ice1)).